Reading from the N-terminus, the 72-residue chain is Translation initiation factor IF-1 (72 aa).

In terms of domain architecture, S1-like spans 1–72 (MSKEDMIEFS…TKGRITFRFK (72 aa)).

It belongs to the IF-1 family. As to quaternary structure, component of the 30S ribosomal translation pre-initiation complex which assembles on the 30S ribosome in the order IF-2 and IF-3, IF-1 and N-formylmethionyl-tRNA(fMet); mRNA recruitment can occur at any time during PIC assembly.

Its subcellular location is the cytoplasm. In terms of biological role, one of the essential components for the initiation of protein synthesis. Stabilizes the binding of IF-2 and IF-3 on the 30S subunit to which N-formylmethionyl-tRNA(fMet) subsequently binds. Helps modulate mRNA selection, yielding the 30S pre-initiation complex (PIC). Upon addition of the 50S ribosomal subunit IF-1, IF-2 and IF-3 are released leaving the mature 70S translation initiation complex. This is Translation initiation factor IF-1 from Granulibacter bethesdensis (strain ATCC BAA-1260 / CGDNIH1).